The chain runs to 185 residues: Thymidine kinase (185 aa).

Residues 7-14 (GPMFAGKT) and 83-86 (DEIQ) each bind ATP. Glu-84 serves as the catalytic Proton acceptor. Cys-139, Cys-142, Cys-177, and His-180 together coordinate Zn(2+).

Belongs to the thymidine kinase family. As to quaternary structure, homotetramer.

The protein localises to the cytoplasm. The enzyme catalyses thymidine + ATP = dTMP + ADP + H(+). The protein is Thymidine kinase of Pyrobaculum aerophilum (strain ATCC 51768 / DSM 7523 / JCM 9630 / CIP 104966 / NBRC 100827 / IM2).